A 193-amino-acid chain; its full sequence is ATP synthase subunit b 1 (193 aa).

The tract at residues 13–32 (PAVTGGDTHSGTGVPAEAHG) is disordered. Residues 40-60 (ATFPSQLLWLAITFGLFYLFL) form a helical membrane-spanning segment.

It belongs to the ATPase B chain family. In terms of assembly, F-type ATPases have 2 components, F(1) - the catalytic core - and F(0) - the membrane proton channel. F(1) has five subunits: alpha(3), beta(3), gamma(1), delta(1), epsilon(1). F(0) has three main subunits: a(1), b(2) and c(10-14). The alpha and beta chains form an alternating ring which encloses part of the gamma chain. F(1) is attached to F(0) by a central stalk formed by the gamma and epsilon chains, while a peripheral stalk is formed by the delta and b chains.

Its subcellular location is the cell inner membrane. Its function is as follows. F(1)F(0) ATP synthase produces ATP from ADP in the presence of a proton or sodium gradient. F-type ATPases consist of two structural domains, F(1) containing the extramembraneous catalytic core and F(0) containing the membrane proton channel, linked together by a central stalk and a peripheral stalk. During catalysis, ATP synthesis in the catalytic domain of F(1) is coupled via a rotary mechanism of the central stalk subunits to proton translocation. In terms of biological role, component of the F(0) channel, it forms part of the peripheral stalk, linking F(1) to F(0). The chain is ATP synthase subunit b 1 from Mesorhizobium japonicum (strain LMG 29417 / CECT 9101 / MAFF 303099) (Mesorhizobium loti (strain MAFF 303099)).